We begin with the raw amino-acid sequence, 299 residues long: Pyridoxal 5'-phosphate synthase subunit PdxS (299 aa).

Asp-24 contacts D-ribose 5-phosphate. Lys-81 serves as the catalytic Schiff-base intermediate with D-ribose 5-phosphate. Gly-153 serves as a coordination point for D-ribose 5-phosphate. Arg-165 is a binding site for D-glyceraldehyde 3-phosphate. D-ribose 5-phosphate is bound by residues Gly-219 and 240 to 241 (GS).

The protein belongs to the PdxS/SNZ family. In terms of assembly, in the presence of PdxT, forms a dodecamer of heterodimers.

It carries out the reaction aldehydo-D-ribose 5-phosphate + D-glyceraldehyde 3-phosphate + L-glutamine = pyridoxal 5'-phosphate + L-glutamate + phosphate + 3 H2O + H(+). It participates in cofactor biosynthesis; pyridoxal 5'-phosphate biosynthesis. Catalyzes the formation of pyridoxal 5'-phosphate from ribose 5-phosphate (RBP), glyceraldehyde 3-phosphate (G3P) and ammonia. The ammonia is provided by the PdxT subunit. Can also use ribulose 5-phosphate and dihydroxyacetone phosphate as substrates, resulting from enzyme-catalyzed isomerization of RBP and G3P, respectively. This Methanococcus maripaludis (strain C5 / ATCC BAA-1333) protein is Pyridoxal 5'-phosphate synthase subunit PdxS.